We begin with the raw amino-acid sequence, 511 residues long: MTKRALVSVSNKTGLIPFVKGLAEAGVEILSTGGGTKRALEEAGIAVVNVSDVTGFPEILDGRVKTLHPNIHGGLLAMRTNDEHIKQIEELGIEPIDYVVVNLYPFAETIANPDASFADAIENIDIGGPSMLRSAAKNHADVTVVVDPADYDAVLASLDASKEEQLALRQKLAAKVFRHTAAYDAMIGSYLTDAVGEENPESLTVTYTHKQTLRYGENPHQKAAFYESRTSSPSSIAQAKQLHGKELSYNNINDANAALEIVKEFSEPAAVAVKHMNPCGVGTGATVGEAYTRAYEADPKSIFGGIVALNREVDRATAEKMAAIFLEVILAPSFSEEAKAILQQKKNIRLLEVAVTKGELEKKLASVHGGLLIQEEDHLGFDDGDIRIPTKREPTEEEWTALKLGWKVVKHVKSNAIVLTNGEMTVGIGAGQMNRVGAAAIAIEQAGERAQGAALASDAFFPYGDTVEAAAKAGITAIIQPGGSVRDNESIEKADEYGIAMVFTGVRHFKH.

The MGS-like domain maps to 1 to 146 (MTKRALVSVS…KNHADVTVVV (146 aa)).

It belongs to the PurH family.

It catalyses the reaction (6R)-10-formyltetrahydrofolate + 5-amino-1-(5-phospho-beta-D-ribosyl)imidazole-4-carboxamide = 5-formamido-1-(5-phospho-D-ribosyl)imidazole-4-carboxamide + (6S)-5,6,7,8-tetrahydrofolate. The catalysed reaction is IMP + H2O = 5-formamido-1-(5-phospho-D-ribosyl)imidazole-4-carboxamide. Its pathway is purine metabolism; IMP biosynthesis via de novo pathway; 5-formamido-1-(5-phospho-D-ribosyl)imidazole-4-carboxamide from 5-amino-1-(5-phospho-D-ribosyl)imidazole-4-carboxamide (10-formyl THF route): step 1/1. It functions in the pathway purine metabolism; IMP biosynthesis via de novo pathway; IMP from 5-formamido-1-(5-phospho-D-ribosyl)imidazole-4-carboxamide: step 1/1. The polypeptide is Bifunctional purine biosynthesis protein PurH (Shouchella clausii (strain KSM-K16) (Alkalihalobacillus clausii)).